The sequence spans 115 residues: MKHSVNRPPTPDEDDVADGFEKDKVTLREIINVKLVESGEKENLMELVRDRLVECGWKDEMRIACREHVKKKGRKDVTVDELIRVITPKGRASVPDSVKAELLNRIQNFIVSAAL.

The protein belongs to the ENY2 family. Component of a deubiquitination module (DUB module) formed by ENY2, SGF11, and UBP22 in Arabidopsis. Interacts directly with SGF11, but not with UBP22. Interacts with MOS4. As to expression, expressed in roots, cotyledons, leaves and upper part of sepals.

The protein localises to the nucleus. Its subcellular location is the nucleoplasm. Functionally, component of a deubiquitination module (DUB module) that specifically deubiquinates monoubiquinated histone H2B (H2Bub). Does not seem to be a component of the TREX-2 complex. Seems to act independently of the SAGA multiprotein complex. The DUB module is responsible for the major H2Bub deubiquitinase activity in Arabidopsis. The sequence is that of Transcription and mRNA export factor ENY2 from Arabidopsis thaliana (Mouse-ear cress).